A 523-amino-acid chain; its full sequence is Polypyrimidine tract-binding protein 3 (523 aa).

The tract at residues 1 to 25 is disordered; that stretch reads MNNSTSAGVYANGNDNKKFKGDRPP. 3 RRM domains span residues 30 to 114, 153 to 229, and 329 to 403; these read RVLH…NLPN, LRII…FSKL, and SVLL…LSKH. A Glycyl lysine isopeptide (Lys-Gly) (interchain with G-Cter in SUMO2) cross-link involves residue Lys36. Tyr98 bears the Phosphotyrosine mark. A Phosphothreonine modification is found at Thr109. Residue Lys187 forms a Glycyl lysine isopeptide (Lys-Gly) (interchain with G-Cter in SUMO2) linkage. An N6-acetyllysine modification is found at Lys394. Residues 406–426 form a disordered region; it reads VQLPREGQEDQGLTKDFSNSP. Ser425 bears the Phosphoserine mark. Residues 446–521 form the RRM 4 domain; that stretch reads ATLHLSNIPP…HHLRVSFSKS (76 aa).

Interacts with THBS4 (via the acidic amphipathic C-terminus). As to expression, detected specifically in spleen, thymus, lungs, and bone marrow.

Functionally, RNA-binding protein that mediates pre-mRNA alternative splicing regulation. Plays a role in the regulation of cell proliferation, differentiation and migration. Positive regulator of EPO-dependent erythropoiesis. Participates in cell differentiation regulation by repressing tissue-specific exons. Promotes Fas exon 6 skipping. Binds RNA, preferentially to both poly(G) and poly(U). The protein is Polypyrimidine tract-binding protein 3 (Ptbp3) of Rattus norvegicus (Rat).